The following is a 1285-amino-acid chain: MTVKLGDAGSGEEGLKKLGKRTADEESLDGEGPGGADAADSSSTKRDGQTPRASGAPAPPRGLPTPSPPQGSPQDQHHFLRSSVRPQSKRPRKDAPCALGSGGASGSGPRGKGSDGGASSSGNVSGATPATPAGGSRSSSRNIGSSGPEKEEGKKVRRQWESWSTEDKNTFFEGLYEHGKDFEAIQNNIALKYKKKGKPASMVKNKEQVRHFYYRTWHKITKYIDFDNVFSRGLKKSSQELYGLICYGELRKKIGGCMDDKNATKLNELIQVGATTVRYKGRNLRIKAPMCRALKKLCDPDGLSDEEDQKPVRLPLKVPVELQPRNNHAWARVQSLAQNPRLRMIVELHRKVSSLIEFLKQKWALHEVRIRKTLEERQLQGSSTVQTQEKVALHLFPGENCTLTPLPGVARVVHSKAFCTVHWQEGGRCKQGTKDIHSLPPAQILGIQSGQGIARGQLKCQRSSAEGKGGGRLLPTADASQSSGESSPESAPAEGAAPSLSSPDAPDRPHGLQDSGPHLEKTPVTALAVGRDSPIQESGALPCPCGQPPDLEDELSLLDPFPRYLKSCQDLIIPEQCRRADTRSGREHPPLGSVASPETLTPSSGAVADSAPPGLDPQPGTDHQPDTRLQSDICTKELANASSEESQEKGSPSEHLSSQGQPATRPSKEVPASQLAQQLREEGWSLQTSESLTLAEVYLMMGKPTKLQLEYDWLAVLGPESQAPTAQGQTALSRSSPSALHQQRLLSCLLRLISTEVHPKMAFEANTASTASVRPTQEEQSTTPPGKVVTINSRSPRCSRNPSTLRSNKTFPSASAPCSPGLRNPPRPLLVAGPSSTGSSDSDGGLFAVPTTLPPNSRHGKLFSPSKEAELTFRQHLDSISIQSDFFSPKPKKLRKRHLRKPLVVQRTLLPRPSENQSHNVCSFSILSNSPIAGRGWFRPIQSSLTKAALSRPIVPKVLPSQATSHLPSAIDLAAQSAGIIPGSPLPILDTDGSSGISPLSSEQATTAISGQGDTGPHQNRDPVTAVRGTNDPFISVTRPEQEPMTDGFQGSPALTLPELSKANLQNGLSIPLPSSESSSTRLSPPNVSALLDISLPGPPEDVLSQGEPATQISDSIIEIAISSGQYSEGVPLSPAKLNGSDSSKSLPSPSSSPQPNWIASPTHDPQWYPSDSADSSLSSLFASFISPEKSRKMLPTTVGANSGTSLLGPSLLDGNSRDSFVSRSLADVAEVVDSQLVCMMNENSIDYISRFNDLAQELSITEPGRREVLFDGGGGGNPVGDLSQ.

Residues M1–E161 form a disordered region. The segment covering E13–D24 has biased composition (basic and acidic residues). Positions P57–G71 are enriched in pro residues. Gly residues predominate over residues G100–G116. Low complexity-rich tracts occupy residues G117–G126 and G134–G147. Residues P148–E161 are compositionally biased toward basic and acidic residues. The 64-residue stretch at R158–T221 folds into the SANT domain. Phosphoserine is present on S304. 6 disordered regions span residues G456–L519, R579–S673, N766–D843, S994–L1055, G1068–G1107, and P1132–D1172. Positions A479–P503 are enriched in low complexity. 2 stretches are compositionally biased toward basic and acidic residues: residues A505–L519 and R579–P589. Polar residues-rich tracts occupy residues E654 to T664 and N766 to P784. A compositionally biased stretch (low complexity) spans N792–S803. Polar residues predominate over residues T804–S813. Low complexity predominate over residues G833–D843. The segment covering S994 to Q1012 has biased composition (polar residues). Composition is skewed to low complexity over residues L1069–P1086 and S1141–P1156. Residue S1284 is modified to Phosphoserine.

It belongs to the cramped family.

The protein localises to the nucleus. The protein is Protein cramped-like of Mus musculus (Mouse).